The primary structure comprises 202 residues: Probable septum site-determining protein MinC (202 aa).

It belongs to the MinC family. In terms of assembly, interacts with MinD and FtsZ.

In terms of biological role, cell division inhibitor that blocks the formation of polar Z ring septums. Rapidly oscillates between the poles of the cell to destabilize FtsZ filaments that have formed before they mature into polar Z rings. Prevents FtsZ polymerization. The polypeptide is Probable septum site-determining protein MinC (Sulfurihydrogenibium sp. (strain YO3AOP1)).